Consider the following 85-residue polypeptide: UPF0335 protein BQ12070 (85 aa).

The protein belongs to the UPF0335 family.

This Bartonella quintana (strain Toulouse) (Rochalimaea quintana) protein is UPF0335 protein BQ12070.